The chain runs to 485 residues: MEGLYKEAVTFADRYNLLNVYGISAVIAVGLAIYSASLAIYRLYFHPLAGFPGPRIAAATRWYEFYYDVIKRGQYVYKIEEMHQKYGPIIRINPHEIVINDPDFYNSVYVAGNTRRTAIWPRYRTGIGFDGSHTMTENHELHRRRRKPLEPFFSRMGIDKMEPMIIEEAKLLNDRLTGLKGSGNVIRLDHVFSAFAGDVIGRICSESPPDMMNHPEFGKEWSAQFDREYRETAPFVHARPATGLVSSLSQSTSACPNRDRLARMIPTGFLLRVYPGAAGFNVFRQLAISHIVDAKKDNFSKEKVEKNSKSSVFRYIITSEMPASECETERLSREAMVLFGAGTATTARTMGFMCYYILTNPHMRERLADELRDVMADYPHKLPSWQELERLPYLQAMIKEGLRLSYGVMRRLPRISPDIPLVYKQWSIPAGTPVGMAAYSLHTDPEVYPEPFKFIPERWLGKYDSRMDRNWVPFSRGSRNCLGMK.

A helical membrane pass occupies residues 20-40 (VYGISAVIAVGLAIYSASLAI). C481 is a heme binding site.

Belongs to the cytochrome P450 family. It depends on heme as a cofactor.

It is found in the membrane. It functions in the pathway secondary metabolite biosynthesis; terpenoid biosynthesis. Functionally, cytochrome P450 monooxygenase; part of the gene cluster that mediates the biosynthesis of talaronoid C, a fusicoccane diterpenoid with an unprecedented tricyclic 5/8/6 ring system. The first step in the pathway is performed by the fusicoccadiene synthase tndC that possesses both prenyl transferase and terpene cyclase activity, converting isopentenyl diphosphate and dimethylallyl diphosphate into geranylgeranyl diphosphate (GGDP) and further converting GGDP into talarodiene, a precursor for talaronoid C. The remaining enzymes from the cluster include the cytochrome P450 monooxygenase tndB, the aldehyde reductase tndE and the alcohol dehydrogenase tndF that are involved in the conversion of talarodiene into talaronoid C. The polypeptide is Cytochrome P450 monooxygenase tndB (Aspergillus flavipes).